The primary structure comprises 1035 residues: Protein hir-1 (1035 aa).

WD repeat units follow at residues 15–54 (QKDF…NSHD), 68–107 (HHLG…PSHT), 129–168 (GHDN…KLKT), 171–210 (VHQS…PNAT), 232–275 (PLTT…SEIN), 299–338 (DENS…PVLI), and 342–383 (IASK…WVAK). The tract at residues 393-479 (KYGGSRKGMG…PEEESADKTA (87 aa)) is disordered. A compositionally biased stretch (basic and acidic residues) spans 408–425 (DGLHLENHSKEKELRGAE).

The protein belongs to the WD repeat HIR1 family.

The protein resides in the nucleus. Its function is as follows. Required for replication-independent chromatin assembly and for the periodic repression of histone gene transcription during the cell cycle. This Neurospora crassa (strain ATCC 24698 / 74-OR23-1A / CBS 708.71 / DSM 1257 / FGSC 987) protein is Protein hir-1 (hir-1).